The sequence spans 371 residues: DNA replication and repair protein RecF (371 aa).

30–37 (GENAQGKT) lines the ATP pocket.

The protein belongs to the RecF family.

Its subcellular location is the cytoplasm. The RecF protein is involved in DNA metabolism; it is required for DNA replication and normal SOS inducibility. RecF binds preferentially to single-stranded, linear DNA. It also seems to bind ATP. The chain is DNA replication and repair protein RecF from Staphylococcus epidermidis (strain ATCC 12228 / FDA PCI 1200).